The chain runs to 566 residues: MKKFNIKSLTLLIVLLPLIVNANNIDSHLLEQNDIAKYVAQSDTVGSFFDRFSALLNYPIVVSKQAAKKRISGEFDLSNPEEMLEKLTLLVGLIWYKDGNALYIYDSGELISKVILLENISLNYLIQYLKDANLYDHRYPIRGNISDKTFYISGPPALVELVANTATLLDKQVSSIGTDKVNFGVIKLKNTFVSDRTYNMRGEDIVIPGVATVVERLLNNGKALSNRQAQNDPMPPFNITQKVSEDSNDFSFSSVTNSSILEDVSLIAYPETNSILVKGNDQQIQIIRDIITQLDVAKRHIELSLWIIDIDKSELNNLGVNWQGTASFGDSFGASFNMSSSASISTLDGNKFIASVMALNQKKKANVVSRPVILTQENIPAIFDNNRTFYVSLVGERNSSLEHVTYGTLINVIPRFSSRGQIEMSLTIEDGTGNSQSNYNYNNENTSVLPEVGRTKISTIARVPQGKSLLIGGYTHETNSNEIVSIPFLSSIPVIGNVFKYKTSNISNIVRVFLIQPREIKESSYYNTAEYKSLISEREIQKTTQIIPSETTLLEDEKSLVSYLNY.

Residues 1–22 (MKKFNIKSLTLLIVLLPLIVNA) form the signal peptide.

Belongs to the bacterial secretin family. T3SS SctC subfamily. As to quaternary structure, the core secretion machinery of the T3SS is composed of approximately 20 different proteins, including cytoplasmic components, a base, an export apparatus and a needle. This subunit is part of the base, which anchors the injectisome in the bacterial cell envelope. Forms a stable homooligomeric complex.

It is found in the cell outer membrane. Its function is as follows. Component of the type III secretion system (T3SS), also called injectisome, which is used to inject bacterial effector proteins into eukaryotic host cells. Forms a ring-shaped multimeric structure with an apparent central pore in the outer membrane. The chain is Type 3 secretion system secretin from Shigella sonnei.